We begin with the raw amino-acid sequence, 42 residues long: Cytochrome b6-f complex subunit 7 (42 aa).

A helical membrane pass occupies residues 15 to 35 (IVTAAVTCIFMVLFGLSLGFA).

It belongs to the PetM family. In terms of assembly, the 4 large subunits of the cytochrome b6-f complex are cytochrome b6, subunit IV (17 kDa polypeptide, PetD), cytochrome f and the Rieske protein, while the 4 small subunits are PetG, PetL, PetM and PetN. The complex functions as a dimer.

The protein localises to the plastid. The protein resides in the chloroplast thylakoid membrane. Its function is as follows. Component of the cytochrome b6-f complex, which mediates electron transfer between photosystem II (PSII) and photosystem I (PSI), cyclic electron flow around PSI, and state transitions. The polypeptide is Cytochrome b6-f complex subunit 7 (Trieres chinensis (Marine centric diatom)).